A 619-amino-acid chain; its full sequence is MESEKDIGAKFLGDYRILYRKGQSLWSEDLLAEHRFIKKRYLIRLLLPDLGSSQPFMEAFHDVVVKLAKLNHPGILSIENVSESEGRCFLVTQEQDIPILSLTQYLKSIPRKLTELEIVDIVSQLASLLDYVHSEGLAQEEWNLDSVYIHILNGVPKVILPDLGFASLIKERILDGFISDEENRESKIKERVLLHTSEGKQGREDTYAFGAITYYLLFGFLPQGIFPMPSKVFSDFIYDWDFLISSCLSCFMEERAKELFPLIRKKTLGEELQNVVTNCIESSLREVPDPLESSQNLPQAVLKVGETKVSHQQKESAEHLEFVLVEACSIDEAMDTAIESESSSGVEEEGYSLALQSLLVREPVVSRYVEAEKEEPKPQPILTEMVLIEGGEFSRGSVEGQRDELPVHKVILHSFFLDVHPVTNEQFIRYLECCGSEQDKYYNELIRLRDSRIQRRSGRLVIEPGYAKHPVVGVTWYGASGYAEWIGKRLPTEAEWEIAASGGVAALRYPCGEEIEKSRANFFTADTTTVMSYPPNPYGLYDMAGNVYEWCQDWYGYDFYEISAQEPESPQGPAQGVYRVLRGGCWKSLKDDLRCAHRHRNNPGAVNSTYGFRCAKNIN.

Positions 15–302 (YRILYRKGQS…SSQNLPQAVL (288 aa)) constitute a Protein kinase domain. Residue 21–29 (KGQSLWSED) participates in ATP binding. Glu-141 serves as the catalytic Proton acceptor.

Belongs to the protein kinase superfamily. Ser/Thr protein kinase family. In terms of processing, autophosphorylated on serine and threonine residues.

It catalyses the reaction L-seryl-[protein] + ATP = O-phospho-L-seryl-[protein] + ADP + H(+). The catalysed reaction is L-threonyl-[protein] + ATP = O-phospho-L-threonyl-[protein] + ADP + H(+). Together with the serine/threonine kinase PknD, may play a role in the specific interactions with host proteins during intracellular growth. This is Serine/threonine-protein kinase pkn1 (pkn1) from Chlamydia pneumoniae (Chlamydophila pneumoniae).